The chain runs to 241 residues: Chaperone protein HifB (241 aa).

An N-terminal signal peptide occupies residues 1–27 (MGKTMFKKTLLFFTALFFAALCAFSAN).

Belongs to the periplasmic pilus chaperone family.

The protein resides in the periplasm. In terms of biological role, mediates assembly of pili by forming soluble multimeric complexes with pili subunits as an intermediate step in the assembly process. This protein is involved in type B pili (HifA) assembly. This Haemophilus influenzae protein is Chaperone protein HifB (hifB).